The primary structure comprises 91 residues: Small ribosomal subunit protein bS20 (91 aa).

Positions methionine 1–serine 23 are disordered. Basic residues predominate over residues alanine 7–histidine 20.

Belongs to the bacterial ribosomal protein bS20 family.

In terms of biological role, binds directly to 16S ribosomal RNA. In Pseudomonas paraeruginosa (strain DSM 24068 / PA7) (Pseudomonas aeruginosa (strain PA7)), this protein is Small ribosomal subunit protein bS20.